We begin with the raw amino-acid sequence, 381 residues long: Succinate--CoA ligase [ADP-forming] subunit beta (381 aa).

The ATP-grasp domain occupies 9–236 (KELLRVAGVP…ESSEAPSEVD (228 aa)). Residues Lys45, 52–54 (GRG), Ala94, and Glu99 contribute to the ATP site. Mg(2+) contacts are provided by Asn191 and Asp205. Residues Asn256 and 313-315 (GIT) contribute to the substrate site.

This sequence belongs to the succinate/malate CoA ligase beta subunit family. Heterotetramer of two alpha and two beta subunits. Mg(2+) serves as cofactor.

It carries out the reaction succinate + ATP + CoA = succinyl-CoA + ADP + phosphate. The enzyme catalyses GTP + succinate + CoA = succinyl-CoA + GDP + phosphate. The protein operates within carbohydrate metabolism; tricarboxylic acid cycle; succinate from succinyl-CoA (ligase route): step 1/1. Succinyl-CoA synthetase functions in the citric acid cycle (TCA), coupling the hydrolysis of succinyl-CoA to the synthesis of either ATP or GTP and thus represents the only step of substrate-level phosphorylation in the TCA. The beta subunit provides nucleotide specificity of the enzyme and binds the substrate succinate, while the binding sites for coenzyme A and phosphate are found in the alpha subunit. This is Succinate--CoA ligase [ADP-forming] subunit beta from Gemmatimonas aurantiaca (strain DSM 14586 / JCM 11422 / NBRC 100505 / T-27).